A 561-amino-acid polypeptide reads, in one-letter code: Corneodesmosin (561 aa).

The N-terminal stretch at 1-32 is a signal peptide; it reads MGSSRAPRMGSVGGHGLMALLMAGLILPGILA. 3 disordered regions span residues 41–275, 415–466, and 536–561; these read PCKD…HTVS, GSVS…SSSL, and PLGP…LEKS. Residues 61 to 99 show a composition bias toward low complexity; the sequence is GSNSISSQGGSSSFSSQGGSSSFSSHGGSSSSQGSSSGS. The span at 116–127 shows a compositional bias: gly residues; that stretch reads GSGGSRPGGSGS. 2 stretches are compositionally biased toward low complexity: residues 128–207 and 224–248; these read QSGS…SSGS and TSGM…PCSS. Over residues 415 to 430 the composition is skewed to polar residues; the sequence is GSVSSKGPCSGTRIQI. Positions 431 to 466 are enriched in low complexity; it reads TSSSSSTSYHPCSGGPSQGPCSSPGTGSISGGSSSL.

It is found in the secreted. Functionally, important for the epidermal barrier integrity. This is Corneodesmosin (Cdsn) from Mus musculus (Mouse).